Here is a 486-residue protein sequence, read N- to C-terminus: Ribosomal RNA small subunit methyltransferase F (486 aa).

S-adenosyl-L-methionine is bound by residues 124-130 (ASAPGSK), Glu-148, Asp-175, and Asp-193. Residue Cys-246 is the Nucleophile of the active site.

Belongs to the class I-like SAM-binding methyltransferase superfamily. RsmB/NOP family.

The protein localises to the cytoplasm. It catalyses the reaction cytidine(1407) in 16S rRNA + S-adenosyl-L-methionine = 5-methylcytidine(1407) in 16S rRNA + S-adenosyl-L-homocysteine + H(+). Specifically methylates the cytosine at position 1407 (m5C1407) of 16S rRNA. The protein is Ribosomal RNA small subunit methyltransferase F of Shewanella baltica (strain OS185).